Reading from the N-terminus, the 335-residue chain is Acetyl-coenzyme A carboxylase carboxyl transferase subunit alpha (335 aa).

Residues 40–294 form the CoA carboxyltransferase C-terminal domain; it reads QLETLAARRR…KEAIEKHLNA (255 aa).

The protein belongs to the AccA family. In terms of assembly, acetyl-CoA carboxylase is a heterohexamer composed of biotin carboxyl carrier protein (AccB), biotin carboxylase (AccC) and two subunits each of ACCase subunit alpha (AccA) and ACCase subunit beta (AccD).

Its subcellular location is the cytoplasm. The catalysed reaction is N(6)-carboxybiotinyl-L-lysyl-[protein] + acetyl-CoA = N(6)-biotinyl-L-lysyl-[protein] + malonyl-CoA. It functions in the pathway lipid metabolism; malonyl-CoA biosynthesis; malonyl-CoA from acetyl-CoA: step 1/1. Functionally, component of the acetyl coenzyme A carboxylase (ACC) complex. First, biotin carboxylase catalyzes the carboxylation of biotin on its carrier protein (BCCP) and then the CO(2) group is transferred by the carboxyltransferase to acetyl-CoA to form malonyl-CoA. This is Acetyl-coenzyme A carboxylase carboxyl transferase subunit alpha from Prochlorococcus marinus (strain AS9601).